Here is a 347-residue protein sequence, read N- to C-terminus: Eukaryotic translation initiation factor 3 subunit H (347 aa).

The MPN domain maps to valine 6 to threonine 149. The tract at residues serine 136–glycine 155 is disordered. Positions threonine 138–glycine 155 are enriched in polar residues.

Belongs to the eIF-3 subunit H family. In terms of assembly, component of the eukaryotic translation initiation factor 3 (eIF-3) complex.

The protein localises to the cytoplasm. Its function is as follows. Component of the eukaryotic translation initiation factor 3 (eIF-3) complex, which is involved in protein synthesis of a specialized repertoire of mRNAs and, together with other initiation factors, stimulates binding of mRNA and methionyl-tRNAi to the 40S ribosome. The eIF-3 complex specifically targets and initiates translation of a subset of mRNAs involved in cell proliferation. This chain is Eukaryotic translation initiation factor 3 subunit H, found in Yarrowia lipolytica (strain CLIB 122 / E 150) (Yeast).